The following is a 120-amino-acid chain: uncharacterized protein (120 aa).

The region spanning 13–119 (VIDKDICKGM…YGLWMAANEE (107 aa)) is the PRD domain.

This is an uncharacterized protein from Escherichia coli (strain K12).